The following is an 83-amino-acid chain: Short neurotoxin C (83 aa).

An N-terminal signal peptide occupies residues 1 to 21 (MKTLLLTLVVVTMVCLDLAYT). Intrachain disulfides connect C24/C45, C38/C62, C64/C75, and C76/C81.

The protein belongs to the three-finger toxin family. Short-chain subfamily. Type I alpha-neurotoxin sub-subfamily. Expressed by the venom gland.

The protein localises to the secreted. Functionally, binds to muscle nicotinic acetylcholine receptor (nAChR) and inhibit acetylcholine from binding to the receptor, thereby impairing neuromuscular transmission. This is Short neurotoxin C from Laticauda colubrina (Yellow-lipped sea krait).